A 511-amino-acid polypeptide reads, in one-letter code: cAMP-regulated M3L protein (511 aa).

It to D.discoideum protein M3R.

The chain is cAMP-regulated M3L protein (prtA) from Dictyostelium discoideum (Social amoeba).